The primary structure comprises 313 residues: Ornithine carbamoyltransferase (313 aa).

Residues 57–60 (STRT), Q84, R108, and 135–138 (HPCQ) each bind carbamoyl phosphate. Residues N166, D230, and 234-235 (SM) each bind L-ornithine. Carbamoyl phosphate is bound by residues 270-271 (CL) and R298.

It belongs to the aspartate/ornithine carbamoyltransferase superfamily. OTCase family. As to quaternary structure, homohexamer.

Its subcellular location is the cytoplasm. The catalysed reaction is carbamoyl phosphate + L-ornithine = L-citrulline + phosphate + H(+). The protein operates within amino-acid biosynthesis; L-arginine biosynthesis; L-arginine from L-ornithine and carbamoyl phosphate: step 1/3. In terms of biological role, reversibly catalyzes the transfer of the carbamoyl group from carbamoyl phosphate (CP) to the N(epsilon) atom of ornithine (ORN) to produce L-citrulline. This is Ornithine carbamoyltransferase from Gloeobacter violaceus (strain ATCC 29082 / PCC 7421).